Here is a 100-residue protein sequence, read N- to C-terminus: Integration host factor subunit beta (100 aa).

Belongs to the bacterial histone-like protein family. In terms of assembly, heterodimer of an alpha and a beta chain.

Functionally, this protein is one of the two subunits of integration host factor, a specific DNA-binding protein that functions in genetic recombination as well as in transcriptional and translational control. This Rhodospirillum rubrum (strain ATCC 11170 / ATH 1.1.1 / DSM 467 / LMG 4362 / NCIMB 8255 / S1) protein is Integration host factor subunit beta.